Consider the following 526-residue polypeptide: Dual specificity tyrosine-phosphorylation-regulated kinase 2 (526 aa).

Polar residues-rich tracts occupy residues 30–40 (TTQPNGLTTLG) and 60–70 (GSSSSLKSTDG). The interval 30 to 76 (TTQPNGLTTLGKSGLPVVQDRQSESAHRRQGSSSSLKSTDGTGKVKA) is disordered. The residue at position 31 (threonine 31) is a Phosphothreonine; by ATM. Residues 114–116 (KKR) carry the Nuclear localization signal motif. The Protein kinase domain occupies 147-460 (YEVLKVIGKG…PSQALRHPWL (314 aa)). ATP is bound by residues 153–161 (IGKGSFGQV), lysine 176, and 226–229 (FELL). Aspartate 273 (proton acceptor) is an active-site residue. Position 307 is a phosphotyrosine (tyrosine 307). A Phosphoserine; by ATM modification is found at serine 367. Positions 462–499 (RRLPKPPTGEKASAKRITESTGAITSISKLPPTSSSAS) are disordered. Polar residues predominate over residues 480-499 (ESTGAITSISKLPPTSSSAS).

It belongs to the protein kinase superfamily. CMGC Ser/Thr protein kinase family. MNB/DYRK subfamily. Interacts with MDM2. The cofactor is Mg(2+). Mn(2+) is required as a cofactor. In terms of processing, phosphorylated on serine/threonine residues. Phosphorylation on Thr-31 and Ser-367 by ATM in response to genotoxic stress disrupts MDM2 binding and prevents MDM2-mediated ubiquitination and subsequent proteasome degradation, thus promoting p53/TP53-mediated apoptosis. Ubiquitination in nucleus by MDM2 in normal conditions leads to proteasome degradation.

It localises to the cytoplasm. Its subcellular location is the nucleus. The enzyme catalyses L-seryl-[protein] + ATP = O-phospho-L-seryl-[protein] + ADP + H(+). The catalysed reaction is L-threonyl-[protein] + ATP = O-phospho-L-threonyl-[protein] + ADP + H(+). It carries out the reaction L-tyrosyl-[protein] + ATP = O-phospho-L-tyrosyl-[protein] + ADP + H(+). Autophosphorylates on tyrosine residues. Serine/threonine-protein kinase involved in the control of mitotic transition and the regulation of cellular growth and/or development. The sequence is that of Dual specificity tyrosine-phosphorylation-regulated kinase 2 from Gallus gallus (Chicken).